The primary structure comprises 487 residues: Probable cytosol aminopeptidase (487 aa).

Mn(2+) contacts are provided by Lys-253 and Asp-258. The active site involves Lys-265. The Mn(2+) site is built by Asp-277, Asp-337, and Glu-339. The active site involves Arg-341.

The protein belongs to the peptidase M17 family. The cofactor is Mn(2+).

The protein resides in the cytoplasm. The enzyme catalyses Release of an N-terminal amino acid, Xaa-|-Yaa-, in which Xaa is preferably Leu, but may be other amino acids including Pro although not Arg or Lys, and Yaa may be Pro. Amino acid amides and methyl esters are also readily hydrolyzed, but rates on arylamides are exceedingly low.. It carries out the reaction Release of an N-terminal amino acid, preferentially leucine, but not glutamic or aspartic acids.. Functionally, presumably involved in the processing and regular turnover of intracellular proteins. Catalyzes the removal of unsubstituted N-terminal amino acids from various peptides. The sequence is that of Probable cytosol aminopeptidase from Parasynechococcus marenigrum (strain WH8102).